A 314-amino-acid polypeptide reads, in one-letter code: MSTDIDNDVRTRWNVTALSAGHQIAMHSALLDMDLLLCGETGTGKDTLASRIHELSSRTGPFVGMNCAAIPESLAESQLFGVVNGAFTGVCRAREGYIEPSNGGTLYLDEIDTMPLSLQAKLLRVLESRGVERLGSTDFIPLDLQVIASASAPLDELVEQGLFRRDLFFRLNVLTLQLPALRKRREQILPLFDQFTQDIAAECGRSAPTLDNGRVQILLSHDWPGNVRELKSAANAICPRIAVAGRRAVEARDPVTGLRMQMRVIEKMLIQDALKRHRHNFDAVLEELELPRRTLYHRMKELGVASHIDLAAES.

One can recognise a Sigma-54 factor interaction domain in the interval 11–239 (TRWNVTALSA…LKSAANAICP (229 aa)). ATP is bound by residues 39 to 46 (GETGTGKD) and 101 to 110 (SNGGTLYLDE). A DNA-binding region (H-T-H motif) is located at residues 281–300 (FDAVLEELELPRRTLYHRMK).

In terms of biological role, member of the two-component regulatory system HrpR/HrpS that regulates the activation of the sigma factor hrpL which itself induces the expression of hprD as well as other hrp loci which are involved in plant pathogenicity, hrmA and avr genes. Probably interacts with sigma-54. The sequence is that of Pathogenicity locus probable regulatory protein HrpR (hrpR) from Pseudomonas syringae pv. syringae.